Here is a 541-residue protein sequence, read N- to C-terminus: Developmental and secondary metabolism regulator VEL1 (541 aa).

The region spanning 26-220 is the Velvet domain; that stretch reads NRHLWYQLTV…ADQGCRVRIR (195 aa). The short motif at 40-45 is the Nuclear localization signal element; it reads ERARAC. Disordered regions lie at residues 222–447 and 464–483; these read DVRM…MPTQ and PIEAQTEPLPPPPLLPTGGK. The span at 230 to 244 shows a compositional bias: basic and acidic residues; the sequence is GKGSGYDRREEEYAR. The span at 289-298 shows a compositional bias: low complexity; the sequence is APSLPHAPSL. 3 stretches are compositionally biased toward pro residues: residues 299 to 314, 345 to 355, and 425 to 439; these read PHAPPPPAYDAPPPAA, APIPPVTPTGP, and SPAPMTPYIAPPAPS. Positions 444–472 are PEST; sequence MPTQSSLAPLKIASLVSPLPPIEAQTEPL.

The protein belongs to the velvet family. VeA subfamily. As to quaternary structure, component of the heterotrimeric velvet complex composed of LAE1, VEL1 and VEL2; VEL1 acting as a bridging protein between LAE1 and VEL2.

It is found in the nucleus. It localises to the cytoplasm. In terms of biological role, component of the velvet transcription factor complex that controls sexual/asexual developmental ratio in response to light, promoting sexual development in the darkness while stimulating asexual sporulation under illumination. The velvet complex acts as a global regulator for secondary metabolite gene expression. Controls the expression of the gliotoxin gene cluster. Plays a key role in mycoparasitism. The sequence is that of Developmental and secondary metabolism regulator VEL1 from Hypocrea virens (strain Gv29-8 / FGSC 10586) (Gliocladium virens).